The chain runs to 377 residues: UDP-N-acetylenolpyruvoylglucosamine reductase (377 aa).

The FAD-binding PCMH-type domain maps to 48–215 (LGGTPMAAVR…LGITLQLHTD (168 aa)). The active site involves Arg193. Residue Ser268 is the Proton donor of the active site. Residue Glu369 is part of the active site.

Belongs to the MurB family. The cofactor is FAD.

It is found in the cytoplasm. The catalysed reaction is UDP-N-acetyl-alpha-D-muramate + NADP(+) = UDP-N-acetyl-3-O-(1-carboxyvinyl)-alpha-D-glucosamine + NADPH + H(+). It functions in the pathway cell wall biogenesis; peptidoglycan biosynthesis. In terms of biological role, cell wall formation. This is UDP-N-acetylenolpyruvoylglucosamine reductase from Corynebacterium diphtheriae (strain ATCC 700971 / NCTC 13129 / Biotype gravis).